The primary structure comprises 835 residues: MKVLALRHSVAQVYADTQTYIHDDSKDEYENAFLISNLTTHNILYLNYSFKTLKILNKSGIAAIEVQSPDELFALIRCNFTYDYENNIVYLHDYSYYTNNEIRTDQYWITKTDIINYLLPGWKLTHVGYNGKNTRGHYNFSFICQNAATDDDIIIEYIYSNELDFQNFLLRKIKERMTTSLPIARLSNRVFRDKLFPSIVNIHKKVINVGPRNESMFTFLNFPTIKQFSNGAYIVKHTIKLKQEKWLGKRISQFDIGQYKNMLNVVTTIYYYYNLYYSKPVIYMLGSAPSYWIYDIKQYSDFTFETWDPLDTPYSTIHHKELFFDKDINKLKDNSVLYIDIRTDRGNMDWKEWRKIVEQQTVNNLNIAYKYLSTGKAKVCCVKLTAMDLELPITAKLLHHPTTEIRSEFYAILDVWDIITIKRFIPKGVFYAFINNVTTENVFIQPPFKLKMSPTDYIVALYALSNDFNSRQDIINLINKQKQSLITVRINNTFKDEPKVSFKNIYDWTFLPTDFELKDSVITSYDGCLGMFGLSISLSPKPTGNNHLFIINGTDKYYKLDQYANHTGISRRSHQIRFSESATSYSGYIFRDLSNNNFNLIGTNVENSVSGHVYNALIYYRYNYAFDLKRWIYLHSIGKVAVEGGRYYEHAPIELIYACRSAKEFAILQDDLTVLRYANEIERYINKVYSITYADDPNYFIGIKFNSIPYEYDVKVPHLTLGVLFISDNMVHNVITVLKKMKTELFKMEISTSYTYMLSDNTYVANVSGVLSTYFKLYNMFYRNHVTFGQSRMFIPHITLSFSNKQTVRIESTKLRINSIYLRKIKGETVFDMSE.

Residues 171-245 (RKIKERMTTS…KHTIKLKQEK (75 aa)) form an N7-methyltransferase activity region. A 2'-O-methyltransferase activity region spans residues 246–428 (WLGKRISQFD…ITIKRFIPKG (183 aa)). The tract at residues 429–555 (VFYAFINNVT…NHLFIINGTD (127 aa)) is N7-methyltransferase activity. A GTase/RTPase activity region spans residues 556 to 692 (KYYKLDQYAN…RYINKVYSIT (137 aa)). Residues 693-835 (YADDPNYFIG…KGETVFDMSE (143 aa)) form a 2'-5'-phosphodiesterase activity region. Residues His718, Thr720, His797, and Thr799 each act as for 2'-5'-phosphodiesterase activity in the active site.

The protein belongs to the rotavirus VP3 family. In terms of assembly, interacts with VP1. Interacts with VP2.

Its subcellular location is the virion. The enzyme catalyses a 5'-end diphospho-ribonucleoside in mRNA + GTP + H(+) = a 5'-end (5'-triphosphoguanosine)-ribonucleoside in mRNA + diphosphate. It carries out the reaction a 5'-end (5'-triphosphoguanosine)-ribonucleoside in mRNA + S-adenosyl-L-methionine = a 5'-end (N(7)-methyl 5'-triphosphoguanosine)-ribonucleoside in mRNA + S-adenosyl-L-homocysteine. It catalyses the reaction 5'-triphosphoadenylyl-(2'-&gt;5')-adenylyl-(2'-&gt;5')-adenosine + 2 H2O = 2 AMP + ATP + 2 H(+). Functionally, multifunctional enzyme involved in mRNA capping. Catalyzes the formation of the 5' cap structure on the viral plus-strand transcripts. Specifically binds to GTP and displays guanylyltransferase and methyltransferase activities. Has affinity for ssRNA but not for dsRNA. Capping activity is non-specific and caps RNAs that initiate with either a G or an A residue. Together with VP1 polymerase, forms a VP1-VP3 complex positioned near the channels situated at each of the five-fold vertices of the core. Following infection, the outermost layer of the virus is lost, leaving a double-layered particle (DLP) made up of the core and VP6 shell. VP1 then catalyzes the transcription of fully conservative plus-strand genomic RNAs that are capped by VP3 and extruded through the DLP's channels into the cytoplasm where they function as mRNAs for translation of viral proteins. DLPs probably have an RNA triphosphatase activity as well, whereas open cores do not. Counteracts the host innate immune response thanks to its phosphodiesterase that degrades the 5'-triphosphorylated, 2'-5' linked adenylate oligomers produced by the host cell IFN-inducible 2',5'-oligoadenylate synthetase (OAS). The host RNaseL is therefore not activated. The polypeptide is Protein VP3 (Homo sapiens (Human)).